Here is a 353-residue protein sequence, read N- to C-terminus: Photosystem II protein D1 (353 aa).

T2 carries the N-acetylthreonine modification. A Phosphothreonine modification is found at T2. Helical transmembrane passes span 29 to 46 (YIGW…TATS), 118 to 133 (HFLL…EWEL), and 142 to 156 (WIAV…AATA). H118 serves as a coordination point for chlorophyll a. Y126 provides a ligand contact to pheophytin a. [CaMn4O5] cluster-binding residues include D170 and E189. The helical transmembrane segment at 197–218 (FHMLGVAGVFGGSLFSAMHGSL) threads the bilayer. Residue H198 coordinates chlorophyll a. A quinone is bound by residues H215 and 264-265 (SF). Position 215 (H215) interacts with Fe cation. H272 serves as a coordination point for Fe cation. Residues 274–288 (FLAAWPVVGIWFTAL) traverse the membrane as a helical segment. Positions 332, 333, 342, and 344 each coordinate [CaMn4O5] cluster. Residues 345–353 (AIEAPSTNG) constitute a propeptide that is removed on maturation.

This sequence belongs to the reaction center PufL/M/PsbA/D family. In terms of assembly, PSII is composed of 1 copy each of membrane proteins PsbA, PsbB, PsbC, PsbD, PsbE, PsbF, PsbH, PsbI, PsbJ, PsbK, PsbL, PsbM, PsbT, PsbX, PsbY, PsbZ, Psb30/Ycf12, at least 3 peripheral proteins of the oxygen-evolving complex and a large number of cofactors. It forms dimeric complexes. It depends on The D1/D2 heterodimer binds P680, chlorophylls that are the primary electron donor of PSII, and subsequent electron acceptors. It shares a non-heme iron and each subunit binds pheophytin, quinone, additional chlorophylls, carotenoids and lipids. D1 provides most of the ligands for the Mn4-Ca-O5 cluster of the oxygen-evolving complex (OEC). There is also a Cl(-1) ion associated with D1 and D2, which is required for oxygen evolution. The PSII complex binds additional chlorophylls, carotenoids and specific lipids. as a cofactor. Tyr-161 forms a radical intermediate that is referred to as redox-active TyrZ, YZ or Y-Z. Post-translationally, C-terminally processed by CTPA; processing is essential to allow assembly of the oxygen-evolving complex and thus photosynthetic growth.

It localises to the plastid. The protein localises to the chloroplast thylakoid membrane. The enzyme catalyses 2 a plastoquinone + 4 hnu + 2 H2O = 2 a plastoquinol + O2. Photosystem II (PSII) is a light-driven water:plastoquinone oxidoreductase that uses light energy to abstract electrons from H(2)O, generating O(2) and a proton gradient subsequently used for ATP formation. It consists of a core antenna complex that captures photons, and an electron transfer chain that converts photonic excitation into a charge separation. The D1/D2 (PsbA/PsbD) reaction center heterodimer binds P680, the primary electron donor of PSII as well as several subsequent electron acceptors. The protein is Photosystem II protein D1 of Nicotiana debneyi (Debney's tobacco).